Reading from the N-terminus, the 494-residue chain is Sphingosine-1-phosphate transporter MFSD2B (494 aa).

Positions 1–12 (MSVPHGPTPAPV) are enriched in pro residues. A disordered region spans residues 1–26 (MSVPHGPTPAPVAEPHTQEPGSDKRD). The next 10 membrane-spanning stretches (helical) occupy residues 103–123 (LMPWALGCMPLIALAYFFLWF), 140–160 (CLFQALATFFQVPYTALTMIL), 179–199 (MAGTLMGATVHGLIVSSAHGS), 223–243 (IAAAVVALTYPVCGSLLCLGV), 277–297 (VVSFLFISAAVQVEQSYLVLF), 310–330 (NLVLIILVSAVLSTPLWEWVL), 339–359 (AFGICVMVPFSILLAAVPSAP), 360–380 (VAYVVAFVSGVSIAVSLLLPW), 402–422 (TIFYSSYVFFTKLSGAGALGI), and 449–469 (VLIGAVPTCMILIGLCILLVG). The interval 473-494 (KMPRQDTSSQLSLRRRTSYSLA) is disordered. A compositionally biased stretch (basic residues) spans 485–494 (LRRRTSYSLA).

This sequence belongs to the major facilitator superfamily. In terms of tissue distribution, widely expressed with highest expression in spleen, lung and testis. Predominantly expressed in erythroid lineages giving rise to erythrocytes and platelets, but absent in lymphoid lineages.

The protein resides in the cell membrane. The enzyme catalyses sphing-4-enine 1-phosphate(in) = sphing-4-enine 1-phosphate(out). It carries out the reaction sphinganine 1-phosphate(in) = sphinganine 1-phosphate(out). It catalyses the reaction sphinga-4E,14Z-dienine-1-phosphate(in) = sphinga-4E,14Z-dienine-1-phosphate(out). Functionally, lipid transporter that specifically mediates export of sphingosine-1-phosphate in red blood cells and platelets. Sphingosine-1-phosphate is a signaling sphingolipid and its export from red blood cells into in the plasma is required for red blood cell morphology. Sphingosine-1-phosphate export from platelets is required for platelet aggregation and thrombus formation. Mediates the export of different sphingosine-1-phosphate (S1P) species, including S1P(d18:0) (sphinganine 1-phosphate), S1P (d18:1) (sphing-4-enine 1-phosphate) and S1P (d18:2) (sphinga-4E,14Z-dienine-1-phosphate). Release of sphingosine-1-phosphate is facilitated by a proton gradient. In contrast, cations, such as sodium, are not required to drive sphingosine-1-phosphate transport. In addition to export, also able to mediate S1P import. Does not transport lysophosphatidylcholine (LPC). In Mus musculus (Mouse), this protein is Sphingosine-1-phosphate transporter MFSD2B.